Consider the following 961-residue polypeptide: Leucine--tRNA ligase (961 aa).

Positions 41 to 51 (PYLNGNLHAGH) match the 'HIGH' region motif. The short motif at 632–636 (KMSKS) is the 'KMSKS' region element. K635 lines the ATP pocket.

Belongs to the class-I aminoacyl-tRNA synthetase family.

It is found in the cytoplasm. The catalysed reaction is tRNA(Leu) + L-leucine + ATP = L-leucyl-tRNA(Leu) + AMP + diphosphate. This chain is Leucine--tRNA ligase, found in Methanosarcina acetivorans (strain ATCC 35395 / DSM 2834 / JCM 12185 / C2A).